The sequence spans 391 residues: MDQFIKQDETGDLIETGMNVANHFLSAPIQGTNSLSKASIIPGVAPVLIGNPEQKNIQHPTASHQGSKSKGRGSGVRSITVPPPEAGNGGTQIPEPLFAQTGQGGIVTTVHQDPTIQPTGSYRSVELAKIGKERMINRFVEKPRTSTPVTEFKRGGPGAAAQGQTIQEEGIDGNGASAGSKERSGSLSGATLYAHLSLPQQDSTPANVGIAPQSATSANEIMDLLRGMDARLQHLEQKVDKVLAQGSMVTQIKNELSTVKTTLATIEGMMATVKIMDPGNPTGVPVDELRRSFSDHVTIVSGPGDVSFSSSEEPTLYLDELARPVSKPRPAKQTKPQPVKDLAGRKVMITKMITDCVANPQMKQAFEQRLAKASTEDALNDIKRDIIRNAI.

Phosphothreonine occurs at positions 10 and 16. Residues 54 to 65 (QKNIQHPTASHQ) are compositionally biased toward polar residues. Disordered regions lie at residues 54–98 (QKNI…EPLF) and 145–186 (TSTP…RSGS). The residue at position 69 (Ser-69) is a Phosphoserine. 3 positions are modified to phosphothreonine: Thr-91, Thr-150, and Thr-165. Ser-188 carries the phosphoserine modification. Residues 218–245 (ANEIMDLLRGMDARLQHLEQKVDKVLAQ) adopt a coiled-coil conformation. Thr-250 is subject to Phosphothreonine. At Ser-257 the chain carries Phosphoserine. Residues Thr-258 and Thr-282 each carry the phosphothreonine modification. A phosphoserine mark is found at Ser-292 and Ser-294. At Thr-298 the chain carries Phosphothreonine. Phosphoserine is present on residues Ser-301 and Ser-374. The tract at residues 343-391 (AGRKVMITKMITDCVANPQMKQAFEQRLAKASTEDALNDIKRDIIRNAI) is interaction with the nucleoprotein. Thr-375 carries the phosphothreonine modification.

It belongs to the rubulavirus/avulavirus P protein family. As to quaternary structure, homotetramer. Interacts (via multimerization domain) with polymerase L; this interaction forms the polymerase L-P complex. Interacts (via N-terminus) with N0 (via Ncore); this interaction allows P to chaperon N0 to avoid N polymerization before encapsidation. Interacts (via C-terminus) with N-RNA template; this interaction positions the polymerase on the template for both transcription and replication. Interacts with host RPS6KB1 kinase; this interaction may play a role in the viral replication and transcription.

It is found in the virion. In terms of biological role, essential cofactor of the RNA polymerase L that plays a central role in the transcription and replication by forming the polymerase complex with RNA polymerase L and recruiting L to the genomic N-RNA template for RNA synthesis. Also plays a central role in the encapsidation of nascent RNA chains by forming the encapsidation complex with the nucleocapsid protein N (N-P complex). Acts as a chaperone for newly synthesized free N protein, so-called N0, allowing encapsidation of nascent RNA chains during replication. The nucleoprotein protein N prevents excessive phosphorylation of P, which leads to down-regulation of viral transcription/ replication. Participates, together with N, in the formation of viral factories (viroplasms), which are large inclusions in the host cytoplasm where replication takes place. This Mumps virus genotype N (strain L-Zagreb vaccine) (MuV) protein is Phosphoprotein.